The following is a 115-amino-acid chain: Colicin-Ib immunity protein (115 aa).

The next 3 membrane-spanning stretches (helical) occupy residues 7 to 27 (VKYLLKSLIPILIILTVFYLG), 38 to 58 (FYAFIGCIISAITFPFSMRII), and 87 to 107 (IFELFCFVISVPVVAIYLIFI).

The protein resides in the cell membrane. In terms of biological role, this protein is able to protect a cell, which harbors the plasmid IncI1 ColIb-P9 encoding colicin Ib, against colicin Ib. The protein is Colicin-Ib immunity protein of Escherichia coli.